We begin with the raw amino-acid sequence, 201 residues long: MAEKFIQHTGLVVPLDAANVDTDAIIPKQFLQKVTRTGFGAHLFNDWRFLDEQGQQPNPAFVLNFPEYQGASILLARENFGCGSSREHAPWALTDYGFKVVIAPSFADIFYGNSFNNQLLPVKLSEEAVDELFALAQANPGIHFEVDLAAQVVKAGDKRYPFEIDAFRRHCMMNGLDSIGLTLQHEDAIAAYENKQPAFMR.

This sequence belongs to the LeuD family. LeuD type 1 subfamily. Heterodimer of LeuC and LeuD.

The enzyme catalyses (2R,3S)-3-isopropylmalate = (2S)-2-isopropylmalate. The protein operates within amino-acid biosynthesis; L-leucine biosynthesis; L-leucine from 3-methyl-2-oxobutanoate: step 2/4. In terms of biological role, catalyzes the isomerization between 2-isopropylmalate and 3-isopropylmalate, via the formation of 2-isopropylmaleate. The chain is 3-isopropylmalate dehydratase small subunit from Salmonella arizonae (strain ATCC BAA-731 / CDC346-86 / RSK2980).